Reading from the N-terminus, the 177-residue chain is ADP-ribosylation factor-like protein 3 (177 aa).

Residue Gly-2 is the site of N-myristoyl glycine attachment. GTP-binding positions include 23-31 (GLDNAGKTT), 125-128 (NKQD), and Ala-159.

The protein belongs to the small GTPase superfamily. Arf family.

The protein localises to the golgi apparatus membrane. It is found in the cytoplasm. It localises to the cytoskeleton. Its subcellular location is the spindle. The protein resides in the nucleus. The protein localises to the microtubule organizing center. Functionally, small GTP-binding protein which cycles between an inactive GDP-bound and an active GTP-bound form, and the rate of cycling is regulated by guanine nucleotide exchange factors (GEF) and GTPase-activating proteins (GAP). Required for normal cytokinesis and cilia signaling. Required for targeting proteins to the ciliary membrane by releasing myristoylated protein from unc119 cargo adapters into the cilium. The protein is ADP-ribosylation factor-like protein 3 of Chlamydomonas reinhardtii (Chlamydomonas smithii).